The primary structure comprises 158 residues: Succinate dehydrogenase [ubiquinone] cytochrome b small subunit B, mitochondrial (158 aa).

The N-terminal 29 residues, 1–29 (MAALVRISSLCHRGVSPLLFRPSSLIRPL), are a transit peptide targeting the mitochondrion. Residues 30–62 (AVQQKDHDCSYLISARIHATPSNYAGSGSKAAT) are Mitochondrial matrix-facing. Residues 63 to 84 (MHWTGERILSIALLSLAPVAYF) form a helical membrane-spanning segment. Residues 85 to 89 (CPSPA) are Mitochondrial intermembrane-facing. Residues 90–110 (VDYSLAAALTLHGHWGLGQVV) traverse the membrane as a helical segment. Position 101 (His-101) interacts with heme b. Topologically, residues 111 to 119 (TDYVHGDAK) are mitochondrial matrix. Tyr-113 provides a ligand contact to a ubiquinone. The chain crosses the membrane as a helical span at residues 120–141 (IKMANAGLFVLSTVTFAGLCYF). Over 142–158 (NYHDVGICKAVALLWSK) the chain is Mitochondrial intermembrane.

Belongs to the CybS family. As to quaternary structure, component of complex II composed of four subunits: the flavoprotein (FP) SDHA, iron-sulfur protein (IP) SDHB, and a cytochrome b560 composed of SDHC and SDHD.

It localises to the mitochondrion inner membrane. The protein operates within carbohydrate metabolism; tricarboxylic acid cycle. Its function is as follows. Membrane-anchoring subunit of succinate dehydrogenase (SDH) that is involved in complex II of the mitochondrial electron transport chain and is responsible for transferring electrons from succinate to ubiquinone (coenzyme Q). SDH also oxidizes malate to the non-canonical enol form of oxaloacetate, enol-oxaloacetate. Enol-oxaloacetate, which is a potent inhibitor of the succinate dehydrogenase activity, is further isomerized into keto-oxaloacetate. In Danio rerio (Zebrafish), this protein is Succinate dehydrogenase [ubiquinone] cytochrome b small subunit B, mitochondrial (sdhdb).